Reading from the N-terminus, the 179-residue chain is uncharacterized protein (179 aa).

Residues Met-1–Ala-19 form the signal peptide. A lipid anchor (N-palmitoyl cysteine) is attached at Cys-20. Residue Cys-20 is the site of S-diacylglycerol cysteine attachment.

Its subcellular location is the cell membrane. This is an uncharacterized protein from Escherichia coli (strain K12).